Reading from the N-terminus, the 716-residue chain is Polyribonucleotide nucleotidyltransferase (716 aa).

Residues Asp486 and Asp492 each coordinate Mg(2+). In terms of domain architecture, KH spans 553–612 (PHIYNIKINPEKIKDVIGKGGAVIRALSDETDTKIDISDDGNITIAALSQKSAAFAQQRI). An S1 motif domain is found at 622 to 690 (GRIYQGTVTR…RQGRIRLSIK (69 aa)).

Belongs to the polyribonucleotide nucleotidyltransferase family. Component of the RNA degradosome, which is a multiprotein complex involved in RNA processing and mRNA degradation. The cofactor is Mg(2+).

The protein resides in the cytoplasm. The enzyme catalyses RNA(n+1) + phosphate = RNA(n) + a ribonucleoside 5'-diphosphate. Involved in mRNA degradation. Catalyzes the phosphorolysis of single-stranded polyribonucleotides processively in the 3'- to 5'-direction. This chain is Polyribonucleotide nucleotidyltransferase, found in Hamiltonella defensa subsp. Acyrthosiphon pisum (strain 5AT).